Reading from the N-terminus, the 751-residue chain is Conserved oligomeric Golgi complex subunit 5 (751 aa).

Disordered regions lie at residues 1-21 (MVTGDPVATKTPNAADSDDND) and 244-263 (SPTHNVSKPAPSRGPGKTPQ).

This sequence belongs to the COG5 family. In terms of assembly, component of the conserved oligomeric Golgi complex which is composed of eight different subunits and is required for normal Golgi morphology and localization.

Its subcellular location is the golgi apparatus membrane. Functionally, required for normal Golgi function and necessary during spermatogenesis. Required for cleavage furrow ingression during cytokinesis in dividing spermatocytes and for the extensive polarized cell growth that accompanies spermatid elongation. This Drosophila melanogaster (Fruit fly) protein is Conserved oligomeric Golgi complex subunit 5 (fws).